Reading from the N-terminus, the 216-residue chain is Protein Syd (216 aa).

This sequence belongs to the Syd family.

It is found in the cell inner membrane. In terms of biological role, interacts with the SecY protein in vivo. May bind preferentially to an uncomplexed state of SecY, thus functioning either as a chelating agent for excess SecY in the cell or as a regulatory factor that negatively controls the translocase function. The chain is Protein Syd from Shewanella sp. (strain ANA-3).